Here is a 112-residue protein sequence, read N- to C-terminus: UPF0060 membrane protein Daro_2632 (112 aa).

Transmembrane regions (helical) follow at residues 7–27 (VLGLFAITALAEIIGCYLPWL), 34–54 (PVWLLIPAAVSLGLFAWLLTL), 59–79 (AGRIYAAYGGVYVAIALIWLW), and 89–109 (WDLVGSAVSLAGMAIIMLQPA).

It belongs to the UPF0060 family.

The protein resides in the cell inner membrane. The chain is UPF0060 membrane protein Daro_2632 from Dechloromonas aromatica (strain RCB).